The primary structure comprises 1578 residues: FERM and PDZ domain-containing protein 1 (1578 aa).

In terms of domain architecture, PDZ spans 57–135 (TVKIDKDTLL…SLSITVVRCT (79 aa)). The region spanning 181 to 496 (NVLKLYLENG…GYYRLLVDPV (316 aa)) is the FERM domain. 3 disordered regions span residues 555-616 (KEEQ…EEDD), 720-743 (SDSSESTASRQGGAPPAWGQQGWT), and 759-831 (PLAF…VKKY). Polar residues predominate over residues 720–729 (SDSSESTASR). A compositionally biased stretch (low complexity) spans 730-742 (QGGAPPAWGQQGW). A compositionally biased stretch (polar residues) spans 793–811 (AEPSATSLQNKASTSSPEN). The segment covering 822-831 (PSRRGGVKKY) has biased composition (basic residues). Positions 924–931 (EPETMETK) are important for interaction with GPSM2. 3 disordered regions span residues 950–1030 (PNNK…LASN), 1070–1194 (KYTE…QGCQ), and 1347–1374 (PQPETEEEDRDLEAHPMAPLTSPPSAGS). Over residues 968-986 (TPHCSNPGSSGPDTAQARP) the composition is skewed to polar residues. Residues 1100 to 1117 (TKEEPQGQLSLERDREVT) are compositionally biased toward basic and acidic residues. The segment covering 1139–1150 (DVSNNVSQTLDI) has biased composition (polar residues).

As to quaternary structure, interacts with GPSM1. Interacts with GPSM2 (via TPR repeat region).

It localises to the cytoplasm. It is found in the cytosol. The protein localises to the cell membrane. Functionally, stabilizes membrane-bound GPSM1, and thereby promotes its interaction with GNAI1. The protein is FERM and PDZ domain-containing protein 1 (FRMPD1) of Homo sapiens (Human).